Consider the following 114-residue polypeptide: uncharacterized protein (114 aa).

It to M.kandleri MK0008.

This is an uncharacterized protein from Methanocaldococcus jannaschii (strain ATCC 43067 / DSM 2661 / JAL-1 / JCM 10045 / NBRC 100440) (Methanococcus jannaschii).